Reading from the N-terminus, the 478-residue chain is UDP-N-acetylmuramate--L-alanine ligase (478 aa).

112–118 (GTHGKTT) contributes to the ATP binding site.

The protein belongs to the MurCDEF family.

Its subcellular location is the cytoplasm. The catalysed reaction is UDP-N-acetyl-alpha-D-muramate + L-alanine + ATP = UDP-N-acetyl-alpha-D-muramoyl-L-alanine + ADP + phosphate + H(+). Its pathway is cell wall biogenesis; peptidoglycan biosynthesis. Functionally, cell wall formation. The chain is UDP-N-acetylmuramate--L-alanine ligase from Polynucleobacter asymbioticus (strain DSM 18221 / CIP 109841 / QLW-P1DMWA-1) (Polynucleobacter necessarius subsp. asymbioticus).